A 585-amino-acid polypeptide reads, in one-letter code: Proline--tRNA ligase (585 aa).

The protein belongs to the class-II aminoacyl-tRNA synthetase family. ProS type 1 subfamily. Homodimer.

It localises to the cytoplasm. The enzyme catalyses tRNA(Pro) + L-proline + ATP = L-prolyl-tRNA(Pro) + AMP + diphosphate. In terms of biological role, catalyzes the attachment of proline to tRNA(Pro) in a two-step reaction: proline is first activated by ATP to form Pro-AMP and then transferred to the acceptor end of tRNA(Pro). As ProRS can inadvertently accommodate and process non-cognate amino acids such as alanine and cysteine, to avoid such errors it has two additional distinct editing activities against alanine. One activity is designated as 'pretransfer' editing and involves the tRNA(Pro)-independent hydrolysis of activated Ala-AMP. The other activity is designated 'posttransfer' editing and involves deacylation of mischarged Ala-tRNA(Pro). The misacylated Cys-tRNA(Pro) is not edited by ProRS. The protein is Proline--tRNA ligase of Cutibacterium acnes (strain DSM 16379 / KPA171202) (Propionibacterium acnes).